A 204-amino-acid chain; its full sequence is Tic20 family protein Ycf60 (204 aa).

The next 4 membrane-spanning stretches (helical) occupy residues 5–25 (LPSLIIIMLTTFSIILISFII), 87–107 (LMPLVIFYVTHPTLAVIIFFI), 133–153 (ILLFLINSLLGATFRALPIEF), and 159–179 (GLMMCNTLFWFVLSTISYSII).

This sequence belongs to the Tic20 family.

Its subcellular location is the plastid. It localises to the chloroplast membrane. The sequence is that of Tic20 family protein Ycf60 (ycf60) from Gracilaria tenuistipitata var. liui (Red alga).